The following is a 121-amino-acid chain: Small ribosomal subunit protein uS13 (121 aa).

Positions 93–121 are disordered; sequence RGLPMRGQRTRTNARTRKGPRKAAQSLKK.

It belongs to the universal ribosomal protein uS13 family. As to quaternary structure, part of the 30S ribosomal subunit. Forms a loose heterodimer with protein S19. Forms two bridges to the 50S subunit in the 70S ribosome.

Located at the top of the head of the 30S subunit, it contacts several helices of the 16S rRNA. In the 70S ribosome it contacts the 23S rRNA (bridge B1a) and protein L5 of the 50S subunit (bridge B1b), connecting the 2 subunits; these bridges are implicated in subunit movement. Contacts the tRNAs in the A and P-sites. The chain is Small ribosomal subunit protein uS13 from Variovorax paradoxus (strain S110).